Consider the following 24-residue polypeptide: Unknown protein 6 (24 aa).

This is Unknown protein 6 from Lonomia obliqua (Moth).